A 373-amino-acid polypeptide reads, in one-letter code: Chemerin-like receptor 1 (373 aa).

Topologically, residues Met-1–Ile-41 are extracellular. Asn-9 is a glycosylation site (N-linked (GlcNAc...) asparagine). A helical transmembrane segment spans residues Phe-42–Ile-64. Residues Ala-65–Met-75 are Cytoplasmic-facing. A helical membrane pass occupies residues Val-76 to Thr-97. The Extracellular portion of the chain corresponds to Tyr-98–Ile-114. A disulfide bond links Cys-112 and Cys-189. The helical transmembrane segment at Ser-115 to Ser-135 threads the bilayer. Over Asp-136–Arg-154 the chain is Cytoplasmic. Residues Leu-155 to Val-176 form a helical membrane-spanning segment. Residues Phe-177–Arg-224 are Extracellular-facing. N-linked (GlcNAc...) asparagine glycosylation occurs at Asn-192. Residues Phe-225–Cys-245 form a helical membrane-spanning segment. At Lys-246–Ile-261 the chain is on the cytoplasmic side. A helical transmembrane segment spans residues Ile-262 to Leu-282. Residues Glu-283–Leu-300 lie on the Extracellular side of the membrane. Residues Ala-301 to Gly-320 form a helical membrane-spanning segment. The Cytoplasmic portion of the chain corresponds to Gln-321 to Leu-373. The residue at position 339 (Ser-339) is a Phosphoserine. Positions Asp-341–Leu-373 are disordered. Position 342 is a phosphothreonine (Thr-342). The span at His-344 to Thr-363 shows a compositional bias: polar residues. Ser-349, Ser-352, and Ser-358 each carry phosphoserine. Residues Ser-364–Leu-373 show a composition bias toward basic and acidic residues.

It belongs to the chemokine-like receptor (CMKLR) family. Prominently expressed in developing osseous and cartilaginous tissue. Also found in adult parathyroid glands. Expressed in cardiovascular system, brain, kidney, gastrointestinal tissues and myeloid tissues. Expressed in a broad array of tissues associated with hematopoietic and immune function including, spleen, thymus, appendix, lymph node, bone marrow and fetal liver. Among leukocyte populations abundant expression in monocyte-derived macrophage and immature dendritic cells (DCs). High expression in blood monocytes and low levels in polymorphonuclear cells and T-cells. Expressed on endothelial cells. Highly expressed in differentiating adipocytes.

The protein localises to the cell membrane. Its function is as follows. Receptor for the chemoattractant adipokine chemerin/RARRES2 and for the omega-3 fatty acid derived molecule resolvin E1. Interaction with RARRES2 initiates activation of G proteins G(i)/G(o) and beta-arrestin pathways inducing cellular responses via second messenger pathways such as intracellular calcium mobilization, phosphorylation of MAP kinases MAPK1/MAPK3 (ERK1/2), TYRO3, MAPK14/P38MAPK and PI3K leading to multifunctional effects, like reduction of immune responses, enhancing of adipogenesis and angionesis. Resolvin E1 down-regulates cytokine production in macrophages by reducing the activation of MAPK1/3 (ERK1/2) and NF-kappa-B. Positively regulates adipogenesis and adipocyte metabolism. (Microbial infection) Acts as a coreceptor for several SIV strains (SIVMAC316, SIVMAC239, SIVMACL7E-FR and SIVSM62A), as well as a primary HIV-1 strain (92UG024-2). This chain is Chemerin-like receptor 1, found in Homo sapiens (Human).